The following is a 166-amino-acid chain: Dynein regulatory complex protein 8 (166 aa).

The EF-hand domain occupies 95 to 130 (DDYHTLLRAFRAFDPDGRGFIDAESFKSLLTGKGEA).

The protein belongs to the DRC8 family. As to quaternary structure, component of the nexin-dynein regulatory complex (N-DRC).

Its subcellular location is the cytoplasm. The protein resides in the cytoskeleton. The protein localises to the flagellum axoneme. Its function is as follows. Component of the nexin-dynein regulatory complex (N-DRC), a key regulator of ciliary/flagellar motility which maintains the alignment and integrity of the distal axoneme and regulates microtubule sliding in motile axonemes. This is Dynein regulatory complex protein 8 from Chlamydomonas reinhardtii (Chlamydomonas smithii).